Reading from the N-terminus, the 107-residue chain is Thioredoxin (107 aa).

The region spanning P2–L107 is the Thioredoxin domain. Catalysis depends on nucleophile residues C32 and C35. C32 and C35 are disulfide-bonded.

The protein belongs to the thioredoxin family.

The protein localises to the plastid. It is found in the chloroplast. In terms of biological role, participates in various redox reactions through the reversible oxidation of its active center dithiol to a disulfide and catalyzes dithiol-disulfide exchange reactions. The polypeptide is Thioredoxin (trxA) (Cyanidium caldarium (Red alga)).